A 540-amino-acid chain; its full sequence is Terminase large subunit (540 aa).

Positions 352, 424, and 523 each coordinate Mn(2+).

The protein belongs to the skunavirus terminase large subunit family. Interacts with the terminase small subunit; the active complex is probably heterooligomeric. Mn(2+) is required as a cofactor. It depends on Mg(2+) as a cofactor.

The terminase large subunit acts as an ATP driven molecular motor necessary for viral DNA translocation into empty capsids and as an endonuclease that cuts the viral genome to initiate and to end a packaging reaction. The terminase lies at a unique vertex of the procapsid and is composed of two subunits, a small terminase subunit involved in viral DNA recognition (packaging sequence), and a large terminase subunit possessing endonucleolytic and ATPase activities. Both terminase subunits heterooligomerize and are docked on the portal protein to form the packaging machine. The terminase large subunit exhibits endonuclease activity and cleaves the viral genome concatemer. This is Terminase large subunit from Lactococcus lactis (Lactococcus lactis bacteriophage SK1).